Reading from the N-terminus, the 440-residue chain is Thymidine phosphorylase (440 aa).

It belongs to the thymidine/pyrimidine-nucleoside phosphorylase family. As to quaternary structure, homodimer.

It carries out the reaction thymidine + phosphate = 2-deoxy-alpha-D-ribose 1-phosphate + thymine. Its pathway is pyrimidine metabolism; dTMP biosynthesis via salvage pathway; dTMP from thymine: step 1/2. The enzymes which catalyze the reversible phosphorolysis of pyrimidine nucleosides are involved in the degradation of these compounds and in their utilization as carbon and energy sources, or in the rescue of pyrimidine bases for nucleotide synthesis. The chain is Thymidine phosphorylase from Yersinia pseudotuberculosis serotype O:1b (strain IP 31758).